The chain runs to 78 residues: uncharacterized protein (78 aa).

2 consecutive transmembrane segments (helical) span residues 20–40 (SVYF…WLVV) and 57–77 (LLMD…ILIA).

The protein localises to the cell membrane. This is an uncharacterized protein from Escherichia coli (strain K12).